An 82-amino-acid polypeptide reads, in one-letter code: Putative membrane protein insertion efficiency factor (82 aa).

The protein belongs to the UPF0161 family.

The protein localises to the cell inner membrane. Its function is as follows. Could be involved in insertion of integral membrane proteins into the membrane. This chain is Putative membrane protein insertion efficiency factor, found in Thermus thermophilus (strain ATCC BAA-163 / DSM 7039 / HB27).